Reading from the N-terminus, the 588-residue chain is Adenine deaminase (588 aa).

Belongs to the metallo-dependent hydrolases superfamily. Adenine deaminase family. As to quaternary structure, homodimer. Requires Mn(2+) as cofactor.

It catalyses the reaction adenine + H2O + H(+) = hypoxanthine + NH4(+). This chain is Adenine deaminase, found in Escherichia fergusonii (strain ATCC 35469 / DSM 13698 / CCUG 18766 / IAM 14443 / JCM 21226 / LMG 7866 / NBRC 102419 / NCTC 12128 / CDC 0568-73).